A 217-amino-acid chain; its full sequence is Probable transaldolase (217 aa).

The active-site Schiff-base intermediate with substrate is Lys83.

Belongs to the transaldolase family. Type 3B subfamily.

Its subcellular location is the cytoplasm. The enzyme catalyses D-sedoheptulose 7-phosphate + D-glyceraldehyde 3-phosphate = D-erythrose 4-phosphate + beta-D-fructose 6-phosphate. Its pathway is carbohydrate degradation; pentose phosphate pathway; D-glyceraldehyde 3-phosphate and beta-D-fructose 6-phosphate from D-ribose 5-phosphate and D-xylulose 5-phosphate (non-oxidative stage): step 2/3. Transaldolase is important for the balance of metabolites in the pentose-phosphate pathway. This chain is Probable transaldolase, found in Dinoroseobacter shibae (strain DSM 16493 / NCIMB 14021 / DFL 12).